The following is a 1342-amino-acid chain: MVYSYTEKKRIRKDFGKRPQVLDVPYLLSIQLDSFQKFIEQDPEGQYGLEAAFRSVFPIQSYSGNSELQYVSYRLGEPVFDVQECQIRGVTYSAPLRVKLRLVIYEREAPEGTVKDIKEQEVYMGEIPLMTDNGTFVINGTERVIVSQLHRSPGVFFDSDKGKTHSSGKVLYNARIIPYRGSWLDFEFDPKDNLFVRIDRRRKLPATIILRALNYTTEQILDLFFEKVIFEIRDNKLQMELVPERLRGETASFDIEANGKVYVEKGRRITARHIRQLEKDDVKLIEVPVEYIAGKVVAKDYIDESTGELICAANMELSLDLLAKLSQSGHKRIETLFTNDLDHGPYISETLRVDPTNDRLSALVEIYRMMRPGEPPTREAAESLFENLFFSEDRYDLSAVGRMKFNRSLLREEIEGSGILSKDDIIDVMKKLIDIRNGKGEVDDIDHLGNRRIRSVGEMAENQFRVGLVRVERAVKERLSLGDLDTLMPQDMINAKPISAAVKEFFGSSQLSQFMDQNNPLSEITHKRRISALGPGGLTRERAGFEVRDVHPTHYGRVCPIETPEGPNIGLINSLSVYAQTNEYGFLETPYRKVTDGVVTDEIHYLSAIEEGNYVIAQANSNLDEEGHFVEDLVTCRSKGESSLFSRDQVDYMDVSTQQVVSVGASLIPFLEHDDANRALMGANMQRQAVPTLRADKPLVGTGMERAVAVDSGVTAVAKRGGVVQYVDASRIVIKVNEDEMYPGEAGIDIYNLTKYTRSNQNTCINQMPCVSLGEPVERGDVLADGPSTDLGELALGQNMRVAFMPWNGYNFEDSILVSERVVQEDRFTTIHIQELACVSRDTKLGPEEITADIPNVGEAALSKLDESGIVYIGAEVTGGDILVGKVTPKGETQLTPEEKLLRAIFGEKASDVKDSSLRVPNGVSGTVIDVQVFTRDGVEKDKRALEIEEMQLKQAKKDLSEELQILEAGLFSRIRAVLVAGGVEAEKLDKLPRDRWLELGLTDEEKQNQLEQLAEQYDELKHEFEKKLEAKRRKITQGDDLSPGVLKIVKVYLAVKRRIQPGDKMAGRHGNKGVISKINPIEDMPYDENGTPVDIVLNPLGVPSRMNIGQILETHLGMAAKGIGDKINAMLKQQQEVAKLREFIQRAYDLGADVRQKVDLSTFSDEEVMRLAENLRKGMPIATPVFDGAKEAEIKELLKLGDLPTSGQIRLYDGRTGEQFERPVTVGYMYMLKLNHLVDDKMHARSTGSYSLVTQQPLGGKAQFGGQRFGEMEVWALEAYGAAYTLQEMLTVKSDDVNGRTKMYKNIVDGNHQMEPGMPESFNVLLKEIRSLGINIELEDE.

N6-acetyllysine is present on residues Lys1022 and Lys1200.

This sequence belongs to the RNA polymerase beta chain family. In terms of assembly, the RNAP catalytic core consists of 2 alpha, 1 beta, 1 beta' and 1 omega subunit. When a sigma factor is associated with the core the holoenzyme is formed, which can initiate transcription.

It carries out the reaction RNA(n) + a ribonucleoside 5'-triphosphate = RNA(n+1) + diphosphate. DNA-dependent RNA polymerase catalyzes the transcription of DNA into RNA using the four ribonucleoside triphosphates as substrates. In Escherichia coli O6:K15:H31 (strain 536 / UPEC), this protein is DNA-directed RNA polymerase subunit beta.